A 337-amino-acid chain; its full sequence is Transcription factor bHLH121 (337 aa).

Positions 58-108 (ARKSQKAGREKLRREKLNEHFVELGNVLDPERPKNDKATILTDTVQLLKEL) constitute a bHLH domain. Positions 235 to 337 (VHIPQNPGNR…AGGQKPDDAK (103 aa)) are disordered. 2 stretches are compositionally biased toward basic and acidic residues: residues 244 to 263 (RSRE…KAED) and 280 to 291 (SDKDTLQRPEKT). The segment covering 297–317 (NNNNNSIEESSHSSKCSSSPS) has biased composition (low complexity).

Homodimer. Expressed constitutively in roots, leaves, stems, and flowers.

It is found in the nucleus. In Arabidopsis thaliana (Mouse-ear cress), this protein is Transcription factor bHLH121 (BHLH121).